Here is a 208-residue protein sequence, read N- to C-terminus: CASP-like protein 2A1 (208 aa).

Topologically, residues 1–36 (MSKMAEQKAAAVDGLGGAGAADAAPAGEAAAARVRP) are cytoplasmic. Residues 37-57 (VETLLRAAPLGLCVAAMTVML) traverse the membrane as a helical segment. Over 58 to 78 (RDQQSNEYGTVAYSDLGGFKY) the chain is Extracellular. A helical transmembrane segment spans residues 79-99 (LVYANGLCAAYSLVSAFYTAV). Over 100–108 (PRPATVSRS) the chain is Cytoplasmic. Residues 109-129 (WVVFLLDQVFTYLILAAGAAA) traverse the membrane as a helical segment. Residues 130-161 (AELLYLAYNGDKEVTWSEACGVFGSFCRQART) lie on the Extracellular side of the membrane. The chain crosses the membrane as a helical span at residues 162 to 182 (SVAITFGTVLCFILLSLISSY). Residues 183 to 208 (RLFSAYEAPPSSALGSKGVEIAAYPR) lie on the Cytoplasmic side of the membrane.

The protein belongs to the Casparian strip membrane proteins (CASP) family. In terms of assembly, homodimer and heterodimers.

Its subcellular location is the cell membrane. This chain is CASP-like protein 2A1, found in Sorghum bicolor (Sorghum).